The chain runs to 539 residues: GMP synthase [glutamine-hydrolyzing] (539 aa).

Positions 4 to 202 (KILILDFGSQ…VLQIAGAKPD (199 aa)) constitute a Glutamine amidotransferase type-1 domain. Cysteine 81 acts as the Nucleophile in catalysis. Catalysis depends on residues histidine 176 and glutamate 178. A GMPS ATP-PPase domain is found at 203-395 (WIMSNHIEEA…LGLPPEMVYR (193 aa)). 230–236 (SGGVDSS) is a binding site for ATP.

Homodimer.

The enzyme catalyses XMP + L-glutamine + ATP + H2O = GMP + L-glutamate + AMP + diphosphate + 2 H(+). Its pathway is purine metabolism; GMP biosynthesis; GMP from XMP (L-Gln route): step 1/1. Its function is as follows. Catalyzes the synthesis of GMP from XMP. This Burkholderia ambifaria (strain MC40-6) protein is GMP synthase [glutamine-hydrolyzing].